A 722-amino-acid chain; its full sequence is NCK-interacting protein with SH3 domain (722 aa).

Residues 1–58 (MYRALYAFRSAEPNALAFAAGETFLVLERSSAHWWLAARARSGETGYVPPAYLRRLQG) form the SH3 domain. Disordered regions lie at residues 101-122 (KETL…SSTS) and 149-286 (PSSE…ASDD). Positions 110–121 (SASSVAVMTSST) are enriched in low complexity. Phosphoserine is present on Ser-120. Over residues 169–185 (QIPPQPRRAAPTTPPPP) the composition is skewed to pro residues. A Nuclear localization signal motif is present at residues 175–192 (RRAAPTTPPPPVKRRDRE). Thr-181 carries the post-translational modification Phosphothreonine. Over residues 206–240 (PSGGNSVSSGSSVSSTSLDTLYTSSSPSEPGSSCS) the composition is skewed to low complexity. Ser-294 carries the phosphoserine modification.

As to quaternary structure, associates with the intermediate filaments, vimentin and desmin. Binds the first and third SH3 domains of NCK. Binds the proline-rich domains of N-WASP through its SH3 domain. Similarly, binds diaphanous protein homolog 1 (DRF1). Binds the SH3 domains of GRB2 through its proline-rich domains. Interacts with Helicobacter pylori toxin vacA. Isoform 4 interacts with FHOD1. Interacts with FASLG. Interacts with TMIGD2. As to expression, highest expression in heart, brain, skeletal muscle, kidney and liver. Lower levels in placenta, lung, small intestine and leukocytes. Weak expression in colon, thymus and spleen.

The protein localises to the nucleus. Functionally, has an important role in stress fiber formation induced by active diaphanous protein homolog 1 (DRF1). Induces microspike formation, in vivo. In vitro, stimulates N-WASP-induced ARP2/3 complex activation in the absence of CDC42. May play an important role in the maintenance of sarcomeres and/or in the assembly of myofibrils into sarcomeres. Implicated in regulation of actin polymerization and cell adhesion. Plays a role in angiogenesis. The polypeptide is NCK-interacting protein with SH3 domain (NCKIPSD) (Homo sapiens (Human)).